Reading from the N-terminus, the 455-residue chain is Guanine/hypoxanthine permease GhxQ (455 aa).

The Cytoplasmic portion of the chain corresponds to 1 to 31; the sequence is MSGDILQTPDAPKPQGALDNYFKITARGSTV. The helical transmembrane segment at 32-55 threads the bilayer; it reads RQEVLAGLTTFLAMVYSVIVVPGM. Topologically, residues 56 to 65 are periplasmic; the sequence is LGKAGFPPAA. A helical transmembrane segment spans residues 66-84; the sequence is VFVATCLVAGFGSLLMGLW. The Cytoplasmic portion of the chain corresponds to 85 to 86; it reads AN. The chain crosses the membrane as a discontinuously helical span at residues 87-103; the sequence is LPMAIGCAISLTAFTAF. At 104 to 115 the chain is on the periplasmic side; the sequence is SLVLGQQISVPV. Residues 116–135 traverse the membrane as a helical segment; it reads ALGAVFLMGVIFTAISVTGV. The Cytoplasmic segment spans residues 136-147; the sequence is RTWILRNLPMGI. The helical transmembrane segment at 148–168 threads the bilayer; that stretch reads AHGTGIGIGLFLLLIAANGVG. Residues 169-186 lie on the Periplasmic side of the membrane; sequence MVIKNPIEGLPVALGAFT. Residues 187-204 form a helical membrane-spanning segment; it reads SFPVMMSLLGLAVIFGLE. At 205–208 the chain is on the cytoplasmic side; the sequence is KCRV. The chain crosses the membrane as a helical span at residues 209–228; that stretch reads PGGILLVIIAISIIGLIFDP. Over 229–260 the chain is Periplasmic; that stretch reads AVKYHGLVAMPSLTGEDGKSLIFSLDIMGALQ. A helical membrane pass occupies residues 261–289; sequence PTVLPSVLALVMTAVFDATGTIRAVAGQA. Over 290-302 the chain is Cytoplasmic; the sequence is NLLDKDNQIINGG. Residues 303-318 traverse the membrane as a helical segment; that stretch reads KALTSDSVSSIFSGLV. The Periplasmic portion of the chain corresponds to 319-320; it reads GA. Residues 321 to 336 traverse the membrane as a discontinuously helical segment; that stretch reads APAAVYIESAAGTAAG. Topologically, residues 337–340 are cytoplasmic; sequence GKTG. The chain crosses the membrane as a helical span at residues 341–355; sequence LTATVVGALFLLILF. Over 356 to 366 the chain is Periplasmic; that stretch reads LSPLSFLIPGY. A helical transmembrane segment spans residues 367–386; it reads ATAPALMYVGLLMLSNVSKL. The Cytoplasmic segment spans residues 387-391; the sequence is DFNDF. Positions 392-427 form an intramembrane region, discontinuously helical; it reads IDAMAGLVCAVFIVLTCNIVTGIMLGFVTLVVGRVF. At 428-455 the chain is on the cytoplasmic side; that stretch reads AREWQKLNIGTVIITAALVAFYAGGWAI.

Belongs to the nucleobase:cation symporter-2 (NCS2) (TC 2.A.40) family. Azg-like subfamily.

Its subcellular location is the cell membrane. Its function is as follows. High-affinity transporter for guanine and hypoxanthine. The protein is Guanine/hypoxanthine permease GhxQ (ghxQ) of Escherichia coli (strain K12).